The primary structure comprises 762 residues: 5-methyltetrahydropteroyltriglutamate--homocysteine methyltransferase (762 aa).

Residues 17–20 (REWK) and lysine 111 each bind 5-methyltetrahydropteroyltri-L-glutamate. L-homocysteine-binding positions include 435–437 (IGS) and glutamate 488. L-methionine is bound by residues 435–437 (IGS) and glutamate 488. Residues 519–520 (RC) and tryptophan 565 each bind 5-methyltetrahydropteroyltri-L-glutamate. An L-homocysteine-binding site is contributed by aspartate 603. Aspartate 603 contacts L-methionine. Glutamate 609 provides a ligand contact to 5-methyltetrahydropteroyltri-L-glutamate. Histidine 645, cysteine 647, and glutamate 669 together coordinate Zn(2+). Catalysis depends on histidine 698, which acts as the Proton donor. A Zn(2+)-binding site is contributed by cysteine 730.

This sequence belongs to the vitamin-B12 independent methionine synthase family. Zn(2+) is required as a cofactor.

The catalysed reaction is 5-methyltetrahydropteroyltri-L-glutamate + L-homocysteine = tetrahydropteroyltri-L-glutamate + L-methionine. The protein operates within amino-acid biosynthesis; L-methionine biosynthesis via de novo pathway; L-methionine from L-homocysteine (MetE route): step 1/1. Functionally, catalyzes the transfer of a methyl group from 5-methyltetrahydrofolate to homocysteine resulting in methionine formation. The polypeptide is 5-methyltetrahydropteroyltriglutamate--homocysteine methyltransferase (Bacillus cereus (strain ZK / E33L)).